Consider the following 392-residue polypeptide: Glycerophosphodiester phosphodiesterase GDPD5 (392 aa).

Residues 1–21 form the signal peptide; that stretch reads MILTRCLPLIWLSLLTVCAAG. A GP-PDE domain is found at 44 to 362; that stretch reads PYNIAHRGSN…DFTGSLHNFQ (319 aa). Residues asparagine 120, asparagine 239, asparagine 260, and asparagine 329 are each glycosylated (N-linked (GlcNAc...) asparagine).

It belongs to the glycerophosphoryl diester phosphodiesterase family. In terms of tissue distribution, expressed in roots, rosette and cauline leaves, stems, flowers and siliques.

It is found in the secreted. The protein localises to the cell wall. Its subcellular location is the vacuole. It catalyses the reaction a sn-glycero-3-phosphodiester + H2O = an alcohol + sn-glycerol 3-phosphate + H(+). The protein is Glycerophosphodiester phosphodiesterase GDPD5 of Arabidopsis thaliana (Mouse-ear cress).